The chain runs to 309 residues: D-alanine--D-alanine ligase (309 aa).

The 200-residue stretch at 105–304 folds into the ATP-grasp domain; sequence KQIWHSVGLP…FNDLVERILA (200 aa). An ATP-binding site is contributed by 135–190; it reads LQELGGRVIVKPAREGSSIGMSIADNGRSLALALQHAAEFDDDLLVEQWVEGAEYT. Residues aspartate 258, glutamate 271, and asparagine 273 each coordinate Mg(2+).

Belongs to the D-alanine--D-alanine ligase family. Requires Mg(2+) as cofactor. Mn(2+) serves as cofactor.

It is found in the cytoplasm. It catalyses the reaction 2 D-alanine + ATP = D-alanyl-D-alanine + ADP + phosphate + H(+). The protein operates within cell wall biogenesis; peptidoglycan biosynthesis. Cell wall formation. This chain is D-alanine--D-alanine ligase, found in Idiomarina loihiensis (strain ATCC BAA-735 / DSM 15497 / L2-TR).